The sequence spans 118 residues: Small ribosomal subunit protein uS13 (118 aa).

The segment at 91–118 (HRRGLPVRGQRTKTNARTRKGPRKPIKK) is disordered.

This sequence belongs to the universal ribosomal protein uS13 family. In terms of assembly, part of the 30S ribosomal subunit. Forms a loose heterodimer with protein S19. Forms two bridges to the 50S subunit in the 70S ribosome.

Its function is as follows. Located at the top of the head of the 30S subunit, it contacts several helices of the 16S rRNA. In the 70S ribosome it contacts the 23S rRNA (bridge B1a) and protein L5 of the 50S subunit (bridge B1b), connecting the 2 subunits; these bridges are implicated in subunit movement. Contacts the tRNAs in the A and P-sites. The chain is Small ribosomal subunit protein uS13 from Pectobacterium atrosepticum (strain SCRI 1043 / ATCC BAA-672) (Erwinia carotovora subsp. atroseptica).